Consider the following 348-residue polypeptide: Protein pelota homolog (348 aa).

This sequence belongs to the eukaryotic release factor 1 family. Pelota subfamily. Monomer. The cofactor is a divalent metal cation.

Its subcellular location is the cytoplasm. May function in recognizing stalled ribosomes, interact with stem-loop structures in stalled mRNA molecules, and effect endonucleolytic cleavage of the mRNA. May play a role in the release non-functional ribosomes and degradation of damaged mRNAs. Has endoribonuclease activity. In Methanococcus vannielii (strain ATCC 35089 / DSM 1224 / JCM 13029 / OCM 148 / SB), this protein is Protein pelota homolog.